A 77-amino-acid chain; its full sequence is NAD(P)H-quinone oxidoreductase subunit L (77 aa).

2 consecutive transmembrane segments (helical) span residues 12–32 and 47–67; these read LIAYIGIISTYLLVIPLLLFY and LGIYGLVFLFFPGLILFSPFL.

This sequence belongs to the complex I NdhL subunit family. In terms of assembly, NDH-1 can be composed of about 15 different subunits; different subcomplexes with different compositions have been identified which probably have different functions.

It is found in the cellular thylakoid membrane. It catalyses the reaction a plastoquinone + NADH + (n+1) H(+)(in) = a plastoquinol + NAD(+) + n H(+)(out). The catalysed reaction is a plastoquinone + NADPH + (n+1) H(+)(in) = a plastoquinol + NADP(+) + n H(+)(out). NDH-1 shuttles electrons from an unknown electron donor, via FMN and iron-sulfur (Fe-S) centers, to quinones in the respiratory and/or the photosynthetic chain. The immediate electron acceptor for the enzyme in this species is believed to be plastoquinone. Couples the redox reaction to proton translocation, and thus conserves the redox energy in a proton gradient. Cyanobacterial NDH-1 also plays a role in inorganic carbon-concentration. The chain is NAD(P)H-quinone oxidoreductase subunit L from Prochlorococcus marinus (strain MIT 9301).